Here is a 362-residue protein sequence, read N- to C-terminus: Dihydroorotate dehydrogenase (quinone) (362 aa).

Residues 62–66 (AGYDK) and T86 contribute to the FMN site. Residue K66 coordinates substrate. 111 to 115 (NRLGF) provides a ligand contact to substrate. FMN-binding residues include N139 and N170. Residue N170 coordinates substrate. Residue S173 is the Nucleophile of the active site. Residue N175 participates in substrate binding. Residues K215 and S243 each contribute to the FMN site. 244 to 245 (NT) is a binding site for substrate. FMN contacts are provided by residues G266, G295, and 316–317 (YS).

It belongs to the dihydroorotate dehydrogenase family. Type 2 subfamily. Monomer. FMN is required as a cofactor.

It is found in the cell membrane. The enzyme catalyses (S)-dihydroorotate + a quinone = orotate + a quinol. Its pathway is pyrimidine metabolism; UMP biosynthesis via de novo pathway; orotate from (S)-dihydroorotate (quinone route): step 1/1. Catalyzes the conversion of dihydroorotate to orotate with quinone as electron acceptor. The protein is Dihydroorotate dehydrogenase (quinone) of Rhizobium rhizogenes (strain K84 / ATCC BAA-868) (Agrobacterium radiobacter).